A 129-amino-acid chain; its full sequence is Large ribosomal subunit protein uL22 (129 aa).

It belongs to the universal ribosomal protein uL22 family. As to quaternary structure, part of the 50S ribosomal subunit.

This protein binds specifically to 23S rRNA; its binding is stimulated by other ribosomal proteins, e.g. L4, L17, and L20. It is important during the early stages of 50S assembly. It makes multiple contacts with different domains of the 23S rRNA in the assembled 50S subunit and ribosome. In terms of biological role, the globular domain of the protein is located near the polypeptide exit tunnel on the outside of the subunit, while an extended beta-hairpin is found that lines the wall of the exit tunnel in the center of the 70S ribosome. This chain is Large ribosomal subunit protein uL22, found in Rhizobium etli (strain ATCC 51251 / DSM 11541 / JCM 21823 / NBRC 15573 / CFN 42).